We begin with the raw amino-acid sequence, 262 residues long: Short-chain Z-isoprenyl diphosphate synthase (262 aa).

D40 is a catalytic residue. D40 is a Mg(2+) binding site. Substrate-binding positions include 41–44, W45, and 86–88; these read GNRR and STE. Catalysis depends on N89, which acts as the Proton acceptor. Substrate is bound by residues R92, R211, and 217–219; that span reads RLS. E230 is a Mg(2+) binding site.

The protein belongs to the UPP synthase family. Z-FPP synthase subfamily. Mg(2+) is required as a cofactor.

The enzyme catalyses isopentenyl diphosphate + (2E)-geranyl diphosphate = (2Z,6E)-farnesyl diphosphate + diphosphate. The protein operates within phospholipid metabolism; decaprenyl phosphate biosynthesis. Generates Z-farnesyl diphosphate (Z-FPP) from isopentenyl pyrophosphate (IPP). Z-FPP is the precursor of decaprenyl diphosphate, which has a central role in the biosynthesis of the mycobacterial cell wall. This Mycobacterium bovis (strain ATCC BAA-935 / AF2122/97) protein is Short-chain Z-isoprenyl diphosphate synthase.